The primary structure comprises 365 residues: Probable 7-methylxanthine methyltransferase 3 (365 aa).

S-adenosyl-L-homocysteine is bound at residue Tyr18. Thr25 is a theobromine binding site. 6 residues coordinate S-adenosyl-L-homocysteine: Cys62, Gln67, Asp99, Leu100, Ser132, and Phe133. Tyr150, His153, and Trp154 together coordinate theobromine. Residues Asn170, Phe258, and Asn259 each coordinate Mg(2+). A theobromine-binding site is contributed by Phe311.

Belongs to the methyltransferase superfamily. Type-7 methyltransferase family. The cofactor is Mg(2+).

It catalyses the reaction 7-methylxanthine + S-adenosyl-L-methionine = theobromine + S-adenosyl-L-homocysteine + H(+). It participates in alkaloid biosynthesis. Its function is as follows. Involved in the biosynthesis of theobromine. The chain is Probable 7-methylxanthine methyltransferase 3 from Theobroma cacao (Cacao).